The sequence spans 108 residues: Resistin (108 aa).

The first 18 residues, 1–18 (MKALCLLLLPVLGLLVSS), serve as a signal peptide directing secretion. 5 disulfides stabilise this stretch: cysteine 51/cysteine 104, cysteine 63/cysteine 103, cysteine 72/cysteine 89, cysteine 74/cysteine 91, and cysteine 78/cysteine 93.

The protein belongs to the resistin/FIZZ family. Homodimer; disulfide-linked. Interacts with DEFA1. In terms of tissue distribution, expressed in white adipose tissue (at protein level). Widely expressed, with particularly strong expression in lung, bone marrow, breast and peripheral blood. Expressed strongly in bone marrow and at lower levels in lung, but not detected in other tissues. Isoform 2 is detected in adipose tissue, bone marrow, brain, lung, peripheral blood, placenta and thymus.

It localises to the secreted. Functionally, hormone that seems to suppress insulin ability to stimulate glucose uptake into adipose cells. Potentially links obesity to diabetes. Promotes chemotaxis in myeloid cells. In Homo sapiens (Human), this protein is Resistin (RETN).